We begin with the raw amino-acid sequence, 608 residues long: Formate hydrogenlyase subunit 3 (608 aa).

The next 12 membrane-spanning stretches (helical) occupy residues 10–26 (GVAWFVAAAVLAFLFSF), 44–67 (LYTAAAGFTVLTGAVGVSGALSLV), 76–93 (LNAIWLITLGLCGLFVSL), 116–140 (AAAVCAVIASNLGMFVVMAEIMALC), 153–173 (LWFALGRLGTLLLAIACWLLW), 197–218 (IWLLGVIGFGLLAGIIPLHGWV), 229–251 (AAALFSTVVMKIGLLGILTLSLL), 258–280 (WWGIALLVLGMITAFVGGLYALV), 296–312 (IGIILLGLGAGVTGIAL), 416–440 (LAVGLAITGALAVMCMAKVYGVTFL), 453–476 (CAPLLMSVSVVALAICCVIGGVAA), and 502–521 (MITLLLIACPLLPFIIMAIC).

It belongs to the complex I subunit 4 family. FHL comprises of a formate dehydrogenase, unidentified electron carriers and a hydrogenase (isoenzyme 3). In this non-energy conserving pathway molecular hydrogen and carbodioxide from formate are released.

It localises to the cell inner membrane. This chain is Formate hydrogenlyase subunit 3 (hycC), found in Escherichia coli (strain K12).